The primary structure comprises 410 residues: Elongation factor Tu, chloroplastic (410 aa).

The tr-type G domain maps to 10–215; it reads KPHVNIGTIG…IVDEYIPTPQ (206 aa). The segment at 19 to 26 is G1; the sequence is GHVDHGKT. Residue 19–26 participates in GTP binding; the sequence is GHVDHGKT. T26 contacts Mg(2+). The interval 61–65 is G2; that stretch reads GITIN. The G3 stretch occupies residues 82 to 85; the sequence is DCPG. GTP contacts are provided by residues 82 to 86 and 137 to 140; these read DCPGH and NKAD. The segment at 137 to 140 is G4; it reads NKAD. Positions 175-177 are G5; it reads SAL.

The protein belongs to the TRAFAC class translation factor GTPase superfamily. Classic translation factor GTPase family. EF-Tu/EF-1A subfamily.

Its subcellular location is the plastid. It localises to the chloroplast. It catalyses the reaction GTP + H2O = GDP + phosphate + H(+). Its function is as follows. GTP hydrolase that promotes the GTP-dependent binding of aminoacyl-tRNA to the A-site of ribosomes during protein biosynthesis. The protein is Elongation factor Tu, chloroplastic (tufA) of Cyanidioschyzon merolae (strain NIES-3377 / 10D) (Unicellular red alga).